The chain runs to 359 residues: Alanine racemase, biosynthetic (359 aa).

Catalysis depends on lysine 34, which acts as the Proton acceptor; specific for D-alanine. Lysine 34 carries the N6-(pyridoxal phosphate)lysine modification. Arginine 129 serves as a coordination point for substrate. Tyrosine 255 (proton acceptor; specific for L-alanine) is an active-site residue. Residue methionine 303 participates in substrate binding.

This sequence belongs to the alanine racemase family. Pyridoxal 5'-phosphate is required as a cofactor.

The enzyme catalyses L-alanine = D-alanine. Its pathway is amino-acid biosynthesis; D-alanine biosynthesis; D-alanine from L-alanine: step 1/1. It functions in the pathway cell wall biogenesis; peptidoglycan biosynthesis. In terms of biological role, catalyzes the interconversion of L-alanine and D-alanine. Provides the D-alanine required for cell wall biosynthesis. This chain is Alanine racemase, biosynthetic (alr), found in Salmonella typhi.